Consider the following 451-residue polypeptide: Probable asparagine--tRNA ligase, cytoplasmic (451 aa).

Belongs to the class-II aminoacyl-tRNA synthetase family.

Its subcellular location is the cytoplasm. It catalyses the reaction tRNA(Asn) + L-asparagine + ATP = L-asparaginyl-tRNA(Asn) + AMP + diphosphate + H(+). This is Probable asparagine--tRNA ligase, cytoplasmic from Encephalitozoon cuniculi (strain GB-M1) (Microsporidian parasite).